The primary structure comprises 260 residues: Hydroxyethylthiazole kinase 1 (260 aa).

Substrate is bound at residue methionine 39. Residues arginine 115 and threonine 160 each coordinate ATP. Glycine 187 is a binding site for substrate.

It belongs to the Thz kinase family. Mg(2+) is required as a cofactor.

It catalyses the reaction 5-(2-hydroxyethyl)-4-methylthiazole + ATP = 4-methyl-5-(2-phosphooxyethyl)-thiazole + ADP + H(+). Its pathway is cofactor biosynthesis; thiamine diphosphate biosynthesis; 4-methyl-5-(2-phosphoethyl)-thiazole from 5-(2-hydroxyethyl)-4-methylthiazole: step 1/1. Its function is as follows. Catalyzes the phosphorylation of the hydroxyl group of 4-methyl-5-beta-hydroxyethylthiazole (THZ). The polypeptide is Hydroxyethylthiazole kinase 1 (Streptococcus pneumoniae serotype 2 (strain D39 / NCTC 7466)).